Reading from the N-terminus, the 620-residue chain is Proline--tRNA ligase (620 aa).

This sequence belongs to the class-II aminoacyl-tRNA synthetase family. ProS type 1 subfamily. In terms of assembly, homodimer.

The protein resides in the cytoplasm. It catalyses the reaction tRNA(Pro) + L-proline + ATP = L-prolyl-tRNA(Pro) + AMP + diphosphate. Functionally, catalyzes the attachment of proline to tRNA(Pro) in a two-step reaction: proline is first activated by ATP to form Pro-AMP and then transferred to the acceptor end of tRNA(Pro). As ProRS can inadvertently accommodate and process non-cognate amino acids such as alanine and cysteine, to avoid such errors it has two additional distinct editing activities against alanine. One activity is designated as 'pretransfer' editing and involves the tRNA(Pro)-independent hydrolysis of activated Ala-AMP. The other activity is designated 'posttransfer' editing and involves deacylation of mischarged Ala-tRNA(Pro). The misacylated Cys-tRNA(Pro) is not edited by ProRS. This Streptococcus thermophilus (strain ATCC BAA-491 / LMD-9) protein is Proline--tRNA ligase.